The chain runs to 319 residues: Malate dehydrogenase (319 aa).

Residues 10-15 (GAGNIG) and Asp34 each bind NAD(+). Substrate-binding residues include Arg83 and Arg89. NAD(+)-binding positions include Asn96 and 119-121 (ITN). Substrate is bound by residues Asn121 and Arg152. The active-site Proton acceptor is His176.

Belongs to the LDH/MDH superfamily. MDH type 3 family.

It catalyses the reaction (S)-malate + NAD(+) = oxaloacetate + NADH + H(+). In terms of biological role, catalyzes the reversible oxidation of malate to oxaloacetate. This Francisella tularensis subsp. tularensis (strain FSC 198) protein is Malate dehydrogenase.